A 319-amino-acid polypeptide reads, in one-letter code: ATP-dependent 6-phosphofructokinase (319 aa).

ATP is bound at residue Gly11. Residue 21 to 25 (RSIAR) coordinates ADP. Residues 72–73 (RC) and 102–105 (GDGS) contribute to the ATP site. Asp103 contributes to the Mg(2+) binding site. 125–127 (TID) lines the substrate pocket. The Proton acceptor role is filled by Asp127. Residue Arg154 participates in ADP binding. Substrate contacts are provided by residues Arg162 and 169–171 (MGR). Residues 185–187 (GAE), Arg211, and 213–215 (KLH) each bind ADP. Substrate is bound by residues Glu222, Lys243, and 249 to 252 (HVQR).

Belongs to the phosphofructokinase type A (PFKA) family. ATP-dependent PFK group I subfamily. Prokaryotic clade 'B1' sub-subfamily. In terms of assembly, homotetramer. The cofactor is Mg(2+).

Its subcellular location is the cytoplasm. The catalysed reaction is beta-D-fructose 6-phosphate + ATP = beta-D-fructose 1,6-bisphosphate + ADP + H(+). The protein operates within carbohydrate degradation; glycolysis; D-glyceraldehyde 3-phosphate and glycerone phosphate from D-glucose: step 3/4. With respect to regulation, allosterically activated by ADP and other diphosphonucleosides, and allosterically inhibited by phosphoenolpyruvate. Functionally, catalyzes the phosphorylation of D-fructose 6-phosphate to fructose 1,6-bisphosphate by ATP, the first committing step of glycolysis. This Finegoldia magna (strain ATCC 29328 / DSM 20472 / WAL 2508) (Peptostreptococcus magnus) protein is ATP-dependent 6-phosphofructokinase.